The primary structure comprises 234 residues: MEFSPPLQRATLIQRYKRFLADVITPDGRELTLHCPNTGAMTGCATPGDTVWYSTSDNTKRKYPHTWELTQSQSGAIICVNTLWANRLTKEAILNESISELAGYSSLKSEVKYGAERSRIDFMLQADSRPDCYIEVKSVTLAENEQGYFPDAVTERGQKHLRELMSVAAEGQRAVIFFAVLHSAITRFSPARHIDEKYAQLLSEAQQRGVEILAYKAELSAEGMALKKSLPVTL.

The segment at residues Leu-201–Ser-220 is a DNA-binding region (H-T-H motif).

The protein belongs to the SfsA family.

Functionally, binds to DNA non-specifically. Could be a regulatory factor involved in maltose metabolism. The protein is Sugar fermentation stimulation protein A of Escherichia coli O127:H6 (strain E2348/69 / EPEC).